Reading from the N-terminus, the 676-residue chain is ATP-dependent RNA helicase dbp-9 (676 aa).

Residues Met1–Phe97 form a disordered region. Positions Gln70–Lys90 are enriched in basic and acidic residues. A Q motif motif is present at residues Leu95–Arg123. Residues Ile126–Met304 enclose the Helicase ATP-binding domain. Ala139 to Thr146 provides a ligand contact to ATP. Positions Asp251–Asp254 match the DEAD box motif. The Helicase C-terminal domain occupies Lys317–Glu541. Positions Glu410–Asn432 are enriched in basic and acidic residues. Disordered regions lie at residues Glu410–Gln444 and Phe633–Lys676. Basic residues predominate over residues Thr642–Gly663.

Belongs to the DEAD box helicase family. DDX56/DBP9 subfamily.

It is found in the nucleus. Its subcellular location is the nucleolus. It carries out the reaction ATP + H2O = ADP + phosphate + H(+). ATP-binding RNA helicase involved in the biogenesis of 60S ribosomal subunits and is required for the normal formation of 25S and 5.8S rRNAs. The sequence is that of ATP-dependent RNA helicase dbp-9 (dbp-9) from Neurospora crassa (strain ATCC 24698 / 74-OR23-1A / CBS 708.71 / DSM 1257 / FGSC 987).